The primary structure comprises 462 residues: N-myc proto-oncogene protein (462 aa).

Residues 19–47 (LEFDSLQPCFYPDEDDFYFGGPDSTPPGE) form an interaction with AURKA region. Residues 61–90 (LSPSRAFPEHSPEPSNWATEMLLPEADLWG) are interaction with AURKA and FBXW7. Residues 76–85 (NWATEMLLPE) carry the 9aaTAD motif. Disordered stretches follow at residues 133 to 177 (EKLQ…ATLP), 232 to 290 (AAPA…SNNK), and 332 to 390 (APSP…LERQ). The segment covering 138–174 (GHGPPGASSSCPAPGVGASSSGGRALGGSASAGRTGA) has biased composition (low complexity). The segment covering 257–276 (TLSDSDDEDDEEEDEEEEID) has biased composition (acidic residues). Phosphoserine; by CK2 occurs at positions 259 and 261. The bHLH domain maps to 379–431 (ERRRNHNILERQRRNDLRSSFLTLRDHVPELVKNEKAAKVVILKKATEYVHAL). The leucine-zipper stretch occupies residues 431 to 452 (LQANEHQLLLEKEKLQARQQQL).

As to quaternary structure, efficient DNA binding requires dimerization with another bHLH protein. Binds DNA as a heterodimer with MAX. Interacts with KDM5A, KDM5B and HUWE1. Interacts with MYCNOS. Interacts with AURKA; interaction is phospho-independent and triggers AURKA activation; AURKA competes with FBXW7 for binding to unphosphorylated MYCN but not for binding to unphosphorylated MYCN. Interacts with FBXW7; FBXW7 competes with AURKA for binding to unphosphorylated MYCN but not for binding to phosphorylated MYCN. Phosphorylated by GSK3-beta which may promote its degradation. Phosphorylated by AURKA.

The protein localises to the nucleus. Positively regulates the transcription of MYCNOS in neuroblastoma cells. This is N-myc proto-oncogene protein (Mycn) from Rattus norvegicus (Rat).